The chain runs to 33 residues: Cytochrome b6-f complex subunit 8 (33 aa).

A helical membrane pass occupies residues 2-22 (LFTLAWASLAAVFSFSIAMVV).

This sequence belongs to the PetN family. In terms of assembly, the 4 large subunits of the cytochrome b6-f complex are cytochrome b6, subunit IV (17 kDa polypeptide, PetD), cytochrome f and the Rieske protein, while the 4 small subunits are PetG, PetL, PetM and PetN. The complex functions as a dimer.

The protein localises to the cellular thylakoid membrane. Its function is as follows. Component of the cytochrome b6-f complex, which mediates electron transfer between photosystem II (PSII) and photosystem I (PSI), cyclic electron flow around PSI, and state transitions. The protein is Cytochrome b6-f complex subunit 8 of Prochlorococcus marinus (strain MIT 9303).